Reading from the N-terminus, the 365-residue chain is Methylthioribose-1-phosphate isomerase (365 aa).

Substrate contacts are provided by residues 53 to 55 (RGA), Arg-90, and Gln-201. Asp-242 serves as the catalytic Proton donor. 252-253 (NK) serves as a coordination point for substrate.

The protein belongs to the eIF-2B alpha/beta/delta subunits family. MtnA subfamily.

It carries out the reaction 5-(methylsulfanyl)-alpha-D-ribose 1-phosphate = 5-(methylsulfanyl)-D-ribulose 1-phosphate. The protein operates within amino-acid biosynthesis; L-methionine biosynthesis via salvage pathway; L-methionine from S-methyl-5-thio-alpha-D-ribose 1-phosphate: step 1/6. Its function is as follows. Catalyzes the interconversion of methylthioribose-1-phosphate (MTR-1-P) into methylthioribulose-1-phosphate (MTRu-1-P). In Methylorubrum extorquens (strain CM4 / NCIMB 13688) (Methylobacterium extorquens), this protein is Methylthioribose-1-phosphate isomerase.